Consider the following 627-residue polypeptide: Endoglucanase 5 (627 aa).

Residues 1–26 (MRKFGGSLFGVSLLLSVLLAAATAAA) form the signal peptide. Residue Asp-83 is the Nucleophile of the active site. Asn-196 carries an N-linked (GlcNAc...) asparagine glycan. His-416 is an active-site residue. N-linked (GlcNAc...) asparagine glycosylation occurs at Asn-465. Catalysis depends on residues Asp-468 and Glu-477. Asn-561 carries N-linked (GlcNAc...) asparagine glycosylation.

Belongs to the glycosyl hydrolase 9 (cellulase E) family.

The protein localises to the secreted. The enzyme catalyses Endohydrolysis of (1-&gt;4)-beta-D-glucosidic linkages in cellulose, lichenin and cereal beta-D-glucans.. In Arabidopsis thaliana (Mouse-ear cress), this protein is Endoglucanase 5.